Here is a 198-residue protein sequence, read N- to C-terminus: Cell division protein SepF (198 aa).

The interval Glu170–Gln198 is disordered. Low complexity predominate over residues Ala179–Ala188.

It belongs to the SepF family. As to quaternary structure, homodimer. Interacts with FtsZ.

Its subcellular location is the cytoplasm. Cell division protein that is part of the divisome complex and is recruited early to the Z-ring. Probably stimulates Z-ring formation, perhaps through the cross-linking of FtsZ protofilaments. Its function overlaps with FtsA. The protein is Cell division protein SepF of Trichormus variabilis (strain ATCC 29413 / PCC 7937) (Anabaena variabilis).